A 508-amino-acid chain; its full sequence is Protein ultraspiracle (508 aa).

The interval 1 to 103 is modulating; it reads MDNCDQDASF…NHPLSGSKHL (103 aa). 2 disordered regions span residues 21–40 and 55–92; these read PDISQLNDSNNSSFSPKAES and PGSNSASSNNNSAGDAQMAQAPNSAGGSAAAAVQQQYP. Polar residues predominate over residues 24-35; the sequence is SQLNDSNNSSFS. Ser35 carries the post-translational modification Phosphoserine. Positions 57–90 are enriched in low complexity; sequence SNSASSNNNSAGDAQMAQAPNSAGGSAAAAVQQQ. 2 consecutive NR C4-type zinc fingers follow at residues 104-124 and 140-164; these read CSICGDRASGKHYGVYSCEGC and CRENRNCIIDKRQRNRCQYCRYQKC. Positions 104–169 form a DNA-binding region, nuclear receptor; sequence CSICGDRASG…RYQKCLTCGM (66 aa). Positions 170 to 223 are hinge; that stretch reads KREAVQEERQRGARNAAGRLSASGGGSSGPGSVGGSSSQGGGGGGGVSGGMGSG. The tract at residues 178–228 is disordered; sequence RQRGARNAAGRLSASGGGSSGPGSVGGSSSQGGGGGGGVSGGMGSGNGSDD. Gly residues predominate over residues 192–224; sequence SGGGSSGPGSVGGSSSQGGGGGGGVSGGMGSGN. An NR LBD domain is found at 239 to 498; it reads SIERIIEAEQ…ELFLEQLEAP (260 aa).

Belongs to the nuclear hormone receptor family. NR2 subfamily. As to quaternary structure, heterodimer of USP and ECR. Only the heterodimer is capable of high-affinity binding to ecdysone.

It is found in the nucleus. In terms of biological role, receptor for ecdysone. May be an important modulator of insect metamorphosis. Plays an important part in embryonic and post-embryonic development. Binds to ecdysone response elements (ECRES) such as in the promoter region of s15 chorion gene. This chain is Protein ultraspiracle (usp), found in Drosophila melanogaster (Fruit fly).